Here is a 202-residue protein sequence, read N- to C-terminus: Small ribosomal subunit protein uS4 (202 aa).

Residues 1–13 are compositionally biased toward basic residues; it reads MSRYRGPRLRVTR. Positions 1–42 are disordered; it reads MSRYRGPRLRVTRRLGELPGLTRKASKKSNPPGQHGQARRKR. The S4 RNA-binding domain occupies 90-152; that stretch reads NRLDNVCFRL…KASKKLVEGN (63 aa).

It belongs to the universal ribosomal protein uS4 family. Part of the 30S ribosomal subunit. Contacts protein S5. The interaction surface between S4 and S5 is involved in control of translational fidelity.

Functionally, one of the primary rRNA binding proteins, it binds directly to 16S rRNA where it nucleates assembly of the body of the 30S subunit. Its function is as follows. With S5 and S12 plays an important role in translational accuracy. The sequence is that of Small ribosomal subunit protein uS4 from Prochlorococcus marinus (strain AS9601).